The sequence spans 91 residues: Small ribosomal subunit protein uS19 (91 aa).

The protein belongs to the universal ribosomal protein uS19 family.

Protein S19 forms a complex with S13 that binds strongly to the 16S ribosomal RNA. The chain is Small ribosomal subunit protein uS19 from Aliarcobacter butzleri (strain RM4018) (Arcobacter butzleri).